A 238-amino-acid polypeptide reads, in one-letter code: Orotidine 5'-phosphate decarboxylase (238 aa).

Substrate-binding positions include D10, K32, 59–68 (DLKLHDIPNT), T122, R184, Q193, G213, and R214. Catalysis depends on K61, which acts as the Proton donor.

It belongs to the OMP decarboxylase family. Type 1 subfamily. In terms of assembly, homodimer.

The catalysed reaction is orotidine 5'-phosphate + H(+) = UMP + CO2. It functions in the pathway pyrimidine metabolism; UMP biosynthesis via de novo pathway; UMP from orotate: step 2/2. In terms of biological role, catalyzes the decarboxylation of orotidine 5'-monophosphate (OMP) to uridine 5'-monophosphate (UMP). In Bacillus cereus (strain G9842), this protein is Orotidine 5'-phosphate decarboxylase.